Here is an 85-residue protein sequence, read N- to C-terminus: Toxin BmKaTx10 (85 aa).

The N-terminal stretch at 1–19 (MNYLVMVSFALLLMTGVES) is a signal peptide. Residues 21-83 (RDGYIALPHN…VPIRVPGRCH (63 aa)) form the LCN-type CS-alpha/beta domain. Disulfide bonds link C31-C82, C35-C55, C41-C65, and C45-C67.

The protein belongs to the long (4 C-C) scorpion toxin superfamily. Sodium channel inhibitor family. Alpha subfamily. In terms of tissue distribution, expressed by the venom gland.

Its subcellular location is the secreted. Functionally, alpha toxins bind voltage-independently at site-3 of sodium channels (Nav) and inhibit the inactivation of the activated channels, thereby blocking neuronal transmission. This Olivierus martensii (Manchurian scorpion) protein is Toxin BmKaTx10.